A 668-amino-acid polypeptide reads, in one-letter code: MDIPKNIKERYEKLKAEIEEHNYRYYVLADPIISDQEYDKLFKELVELEKKYPELKTPDSPTQRIGGIVVEGFNKVNHLIPMLSLDNTYNEEEILDFHKRVLKNLSLNHVEYFCELKIDGVSVALRYTDGVLTQAITRGDGTTGEDITQNVKTIPSIPLRLRENLTIEVRGEIYMPKKEFVRINSEREEKGLPVFANPRNATAGTLKLLDSTEVAKRKLSSFMYYVIFPQNYNLETQEEAINFLKEVGFRINPNYKNAQDIGQVIEFWKEWNRRRKELEYEVDGIVVKVNSFELQRLLGETARSPRWAIAFKFEAEQKETKLKAIKLQVGSTGIITPVAEFDPIQLEGTIVKRASLHNFDYLKERDIREGDYVLIEKAGGIIPQVIGPVKEKRTGEEKIIRPPEKCPVCGGKVGKIKSSEVAIRCLNPSCPEKLLRTLENFVSRNAMNIQGLGPKILKRMVDAGLLKDIADLYYLNEQKIRSLGEGIGDKTVENILTQIEQSKNRELDRLINALGIPNVGSKTAKDLANHFKNLDSLIDAKFDELVEIEGIGEDIANAIIKFFSQEEVKKIVKKLKDAGVNMGKKEEEKLEGPLKGLVICQTGALSKMTRQEFAEYVESKGGTFSENVTKKTNILVVGENPGSKLDKAQSYGITIMSEEEFFDKYGES.

Residues Asp35–Asp39, Ser84–Leu85, and Glu115 contribute to the NAD(+) site. Residue Lys117 is the N6-AMP-lysine intermediate of the active site. Positions 138, 172, 288, and 312 each coordinate NAD(+). Cys406, Cys409, Cys425, and Cys430 together coordinate Zn(2+). In terms of domain architecture, BRCT spans Lys589 to Ser668.

The protein belongs to the NAD-dependent DNA ligase family. LigA subfamily. It depends on Mg(2+) as a cofactor. The cofactor is Mn(2+).

It catalyses the reaction NAD(+) + (deoxyribonucleotide)n-3'-hydroxyl + 5'-phospho-(deoxyribonucleotide)m = (deoxyribonucleotide)n+m + AMP + beta-nicotinamide D-nucleotide.. In terms of biological role, DNA ligase that catalyzes the formation of phosphodiester linkages between 5'-phosphoryl and 3'-hydroxyl groups in double-stranded DNA using NAD as a coenzyme and as the energy source for the reaction. It is essential for DNA replication and repair of damaged DNA. The protein is DNA ligase of Petrotoga mobilis (strain DSM 10674 / SJ95).